The chain runs to 337 residues: Vacuolar protein sorting-associated protein 26B-B (337 aa).

The segment at 313–337 (RFEGTSHPETRPQHSGAAALEQEHE) is disordered.

Belongs to the VPS26 family. Component of the heterotrimeric retromer cargo-selective complex (CSC) which is believed to associate with variable sorting nexins to form functionally distinct retromer complex variants.

It is found in the cytoplasm. The protein localises to the membrane. Its subcellular location is the endosome. In terms of biological role, acts as a component of the retromer cargo-selective complex (CSC). The CSC is believed to be the core functional component of retromer or respective retromer complex variants acting to prevent missorting of selected transmembrane cargo proteins into the lysosomal degradation pathway. Retromer mediates retrograde transport of cargo proteins from endosomes to the trans-Golgi network (TGN). This is Vacuolar protein sorting-associated protein 26B-B (vps26b-b) from Xenopus laevis (African clawed frog).